Here is a 355-residue protein sequence, read N- to C-terminus: Probable nitronate monooxygenase (355 aa).

FMN-binding positions include N71, Q175, G180, G218, and 237 to 240 (QMGT).

Belongs to the nitronate monooxygenase family. NMO class I subfamily. FMN is required as a cofactor.

The catalysed reaction is 3 propionate 3-nitronate + 3 O2 + H2O = 3 3-oxopropanoate + 2 nitrate + nitrite + H2O2 + 3 H(+). Nitronate monooxygenase that uses molecular oxygen to catalyze the oxidative denitrification of alkyl nitronates. Acts on propionate 3-nitronate (P3N), the presumed physiological substrate. Probably functions in the detoxification of P3N, a metabolic poison produced by plants and fungi as a defense mechanism. The polypeptide is Probable nitronate monooxygenase (Staphylococcus aureus (strain MSSA476)).